We begin with the raw amino-acid sequence, 403 residues long: Ribosomal RNA large subunit methyltransferase I (403 aa).

The 80-residue stretch at 9–88 (YPRLVLSKGR…ESIDIAFFTR (80 aa)) folds into the PUA domain.

It belongs to the methyltransferase superfamily. RlmI family.

The protein resides in the cytoplasm. It carries out the reaction cytidine(1962) in 23S rRNA + S-adenosyl-L-methionine = 5-methylcytidine(1962) in 23S rRNA + S-adenosyl-L-homocysteine + H(+). Specifically methylates the cytosine at position 1962 (m5C1962) of 23S rRNA. In Salmonella enteritidis PT4 (strain P125109), this protein is Ribosomal RNA large subunit methyltransferase I.